Here is a 413-residue protein sequence, read N- to C-terminus: Prophage integrase IntA (413 aa).

The 82-residue stretch at 105–186 (NTFLLVAERW…RINEVMIYAQ (82 aa)) folds into the Core-binding (CB) domain. The 178-residue stretch at 209–386 (KNMPSIRPDQ…DYLEQRRPMM (178 aa)) folds into the Tyr recombinase domain. Active-site residues include arginine 248, lysine 275, histidine 337, arginine 340, and histidine 363. Tyrosine 373 functions as the O-(3'-phospho-DNA)-tyrosine intermediate in the catalytic mechanism.

This sequence belongs to the 'phage' integrase family.

In terms of biological role, integrase is necessary for integration of the phage into the host genome by site-specific recombination. In conjunction with excisionase, integrase is also necessary for excision of the prophage from the host genome. Part of the cryptic P4-like prophage CP4-57, it excises the prophage when overexpressed, which also requires integration host factor (encoded by ihfA and ihfB). Overexpression of AlpA leads to excision of the CP4-57 prophage, which inactivates ssrA (the gene upstream of the prophage) that encodes tmRNA which is required to rescue stalled ribosomes in a process known as trans-translation. The protein is Prophage integrase IntA (intA) of Escherichia coli (strain K12).